Here is a 114-residue protein sequence, read N- to C-terminus: QVMPFMEVYERSVCQTREMLVSILDEYPSEVAHLFRPSCVTVLRCGGCCTEESLTCTATGKRSVGREIMRVDPRQGTSKIEVMQFTEHTECECRPGSTVNNGKRKKNPKEGEPR.

Gln1 carries the pyrrolidone carboxylic acid modification. 3 cysteine pairs are disulfide-bonded: Cys14–Cys56, Cys45–Cys91, and Cys49–Cys93. A disordered region spans residues 92-114; it reads ECRPGSTVNNGKRKKNPKEGEPR.

This sequence belongs to the PDGF/VEGF growth factor family. Snake venom VEGF subfamily. As to quaternary structure, homodimer; disulfide-linked. Interacts with human VEGF receptor 1/FLT1. Interacts with human VEGF receptor 2/KDR. In terms of tissue distribution, expressed by venom gland.

It localises to the secreted. Functionally, snake venom vascular endothelial growth factor (svVEGF) that may contribute to venom dispersion and prey subjugation by inducing vascular permeability and hypotension. Induces an increase in capillary permeability after intradermal injection, as well as a drastic hypotensive effect after intravenous injection. The hypotension is mediated by nitric oxide (NO), which is produced by VEGF-activated endothelium NO synthase. Induces angiogenesis and migration of human vascular endothelial cells in vitro. Exhibits angiogenic activity by inducing human umbilical vein endothelial cells (HUVEC) to develop vessels in vitro. Induces cellular migration of HUVEC cells towards a wound in scratch assays, enhancing wound closure after 12 h by 49.5%. Induces dose-dependent leukocyte recruitment to the peritoneal cavity leading to increased vascular permeability in mice. This is Snake venom vascular endothelial growth factor from Crotalus durissus terrificus (South American rattlesnake).